The primary structure comprises 126 residues: Small ribosomal subunit protein uS13 (126 aa).

The disordered stretch occupies residues 92–126 (HRMGLPVRGQRTRTNARTRRGRRQTVAGKKKAPGK). Over residues 101–126 (QRTRTNARTRRGRRQTVAGKKKAPGK) the composition is skewed to basic residues.

Belongs to the universal ribosomal protein uS13 family. In terms of assembly, part of the 30S ribosomal subunit. Forms a loose heterodimer with protein S19. Forms two bridges to the 50S subunit in the 70S ribosome.

Its function is as follows. Located at the top of the head of the 30S subunit, it contacts several helices of the 16S rRNA. In the 70S ribosome it contacts the 23S rRNA (bridge B1a) and protein L5 of the 50S subunit (bridge B1b), connecting the 2 subunits; these bridges are implicated in subunit movement. Contacts the tRNAs in the A and P-sites. The sequence is that of Small ribosomal subunit protein uS13 from Nostoc sp. (strain PCC 7120 / SAG 25.82 / UTEX 2576).